We begin with the raw amino-acid sequence, 545 residues long: MSRKQNQKDSSGFIFDLQSNTVLAQGGAFENMKEKINAVRAIVPNKSNNEIILVLQHFDNCVDKTVQAFMEGSASEVLKEWTVTGKKKNKKKKNKPKPAAEPSNGIPDSSKSVSIQEEQSAPSSEKGGMNGYHVNGAINDTESVDSLSEGLETLSIDARELEDPESAMLDTLDRTGSMLQNGVSDFETKSLTMHSIHNSQQPRNAAKSLSRPTTETQFSNMGMEDVPLATSKKLSSNIEKSVKDLQRCTVSLARYRVVVKEEMDASIKKMKQAFAELESCLMDREVALLAEMDKVKAEAMEILLSRQKKAELLKKMTHVAVQMSEQQLVELRADIKHFVSERKYDEDLGRVARFTCDVETLKKSIDSFGQVSHPKNSYSTRSRCSSVTSVSLSSPSDASAASSSTCASPPSLTSANKKNFAPGETPAAIANSSGQPYQPLREVLPGNRRGGQGYRPQGQKSNDPMNQGRHDSMGRYRNSSWYSSGSRYQSAPSQAPGNTIERGQTHSAGTNGTGVSMEPSPPTPSFKKGLPQRKPRTSQTEAVNS.

The span at 85–96 (GKKKNKKKKNKP) shows a compositional bias: basic residues. The interval 85 to 137 (GKKKNKKKKNKPKPAAEPSNGIPDSSKSVSIQEEQSAPSSEKGGMNGYHVNGA) is disordered. Over residues 106–123 (IPDSSKSVSIQEEQSAPS) the composition is skewed to polar residues. Phosphoserine is present on residues Ser-143, Ser-146, and Ser-148. Disordered stretches follow at residues 197–216 (HNSQ…TTET) and 369–545 (GQVS…AVNS). The segment covering 369 to 378 (GQVSHPKNSY) has biased composition (polar residues). Low complexity-rich tracts occupy residues 379-415 (STRS…LTSA) and 475-490 (RYRN…RYQS). Polar residues predominate over residues 491 to 514 (APSQAPGNTIERGQTHSAGTNGTG). Ser-520 bears the Phosphoserine mark.

It belongs to the SPATS2 family.

The protein localises to the cytoplasm. The protein is Spermatogenesis-associated serine-rich protein 2 (SPATS2) of Homo sapiens (Human).